The primary structure comprises 522 residues: Na(+)/H(+) antiporter NhaB (522 aa).

11 helical membrane passes run 25–45 (VFLV…GWLL), 49–69 (FIFT…GMLA), 87–107 (ILAN…IYFM), 128–162 (LSLA…FYGV), 201–221 (LMMH…VGEP), 237–257 (FFFR…VTCI), 302–322 (VFVG…VGLI), 356–376 (LVVF…APVI), 388–408 (LLLF…VFVA), 446–466 (ATPN…SPLI), and 476–496 (MALP…EYVL).

The protein belongs to the NhaB Na(+)/H(+) (TC 2.A.34) antiporter family.

It is found in the cell inner membrane. It catalyses the reaction 2 Na(+)(in) + 3 H(+)(out) = 2 Na(+)(out) + 3 H(+)(in). In terms of biological role, na(+)/H(+) antiporter that extrudes sodium in exchange for external protons. This Actinobacillus succinogenes (strain ATCC 55618 / DSM 22257 / CCUG 43843 / 130Z) protein is Na(+)/H(+) antiporter NhaB.